Reading from the N-terminus, the 203-residue chain is Proteasome subunit beta 2 (203 aa).

Residues 1–9 (MGEEVQIGA) constitute a propeptide, removed in mature form; by autocatalysis. Thr-10 acts as the Nucleophile in catalysis.

Belongs to the peptidase T1B family. In terms of assembly, the 20S proteasome core is composed of 14 alpha and 14 beta subunits that assemble into four stacked heptameric rings, resulting in a barrel-shaped structure. The two inner rings, each composed of seven catalytic beta subunits, are sandwiched by two outer rings, each composed of seven alpha subunits. The catalytic chamber with the active sites is on the inside of the barrel. Has a gated structure, the ends of the cylinder being occluded by the N-termini of the alpha-subunits. Is capped at one or both ends by the proteasome regulatory ATPase, PAN.

It is found in the cytoplasm. It catalyses the reaction Cleavage of peptide bonds with very broad specificity.. With respect to regulation, the formation of the proteasomal ATPase PAN-20S proteasome complex, via the docking of the C-termini of PAN into the intersubunit pockets in the alpha-rings, triggers opening of the gate for substrate entry. Interconversion between the open-gate and close-gate conformations leads to a dynamic regulation of the 20S proteasome proteolysis activity. Its function is as follows. Component of the proteasome core, a large protease complex with broad specificity involved in protein degradation. The protein is Proteasome subunit beta 2 of Pyrobaculum arsenaticum (strain DSM 13514 / JCM 11321 / PZ6).